A 498-amino-acid polypeptide reads, in one-letter code: ATP synthase subunit beta, chloroplastic (498 aa).

An ATP-binding site is contributed by 172-179; the sequence is GGAGVGKT.

The protein belongs to the ATPase alpha/beta chains family. F-type ATPases have 2 components, CF(1) - the catalytic core - and CF(0) - the membrane proton channel. CF(1) has five subunits: alpha(3), beta(3), gamma(1), delta(1), epsilon(1). CF(0) has four main subunits: a(1), b(1), b'(1) and c(9-12).

The protein localises to the plastid. It localises to the chloroplast thylakoid membrane. It catalyses the reaction ATP + H2O + 4 H(+)(in) = ADP + phosphate + 5 H(+)(out). In terms of biological role, produces ATP from ADP in the presence of a proton gradient across the membrane. The catalytic sites are hosted primarily by the beta subunits. The protein is ATP synthase subunit beta, chloroplastic of Beta vulgaris (Sugar beet).